The primary structure comprises 492 residues: Dipeptide permease D (492 aa).

The next 13 helical transmembrane spans lie at 14–34 (VVALQIWEYFSFYGMRALLIL), 49–69 (ALFSAYCSLVYVTPILGGYLA), 91–111 (LVLGASETAPLFLYLSLAIIV), 138–158 (GGFSLMYAAGNIGSIIAPIAC), 167–187 (WAMGFALAAIGMVAGLVIFLC), 212–232 (NWGWLLVLLVTAPLLIAVLFW), 236–256 (SVYALIVATAIGLAVLARIYL), 269–289 (LIVVLTAFSLLFWAFAQQGGS), 312–332 (MFQSINAFAVMLCGMVLAWLV), 344–364 (IWGKFALGLGLMSAGFCILTL), 379–399 (LMVLGLAVMGFAELFIDPVAM), 413–433 (VLTGIYMLLSGAIANYLAGVI), and 458–478 (VFSQITWGALACVGVVLVIWL).

The protein belongs to the major facilitator superfamily. Proton-dependent oligopeptide transporter (POT/PTR) (TC 2.A.17) family. DtpD subfamily.

It localises to the cell inner membrane. Its function is as follows. Probable proton-dependent permease that transports dipeptides. This chain is Dipeptide permease D, found in Klebsiella pneumoniae subsp. pneumoniae (strain ATCC 700721 / MGH 78578).